A 119-amino-acid polypeptide reads, in one-letter code: Protein RALF-like 22 (119 aa).

The first 23 residues, 1 to 23, serve as a signal peptide directing secretion; sequence MTNTRAIYAVIAILAIVISAVES. Residues 24 to 70 constitute a propeptide, removed in mature form; that stretch reads TGDFGDSLDFVRAGSSSLFSGCTGSIAECIAEEEEMEFDSDISRRIL. 2 disulfide bridges follow: Cys-88–Cys-98 and Cys-111–Cys-117.

It belongs to the plant rapid alkalinization factor (RALF) family. Proteolytically cleaved, probably by S1P, a subtilisin-like serine protease (subtilase).

The protein resides in the secreted. Its function is as follows. Cell signaling peptide that may regulate plant stress, growth, and development. Mediates a rapid alkalinization of extracellular space by mediating a transient increase in the cytoplasmic Ca(2+) concentration leading to a calcium-dependent signaling events through a cell surface receptor and a concomitant activation of some intracellular mitogen-activated protein kinases. The protein is Protein RALF-like 22 (RALFL22) of Arabidopsis thaliana (Mouse-ear cress).